The chain runs to 1486 residues: Chromosome partition protein MukB (1486 aa).

34-41 (GGNGAGKS) lines the ATP pocket. Coiled coils occupy residues 326–418 (LEAD…QYNQ), 444–480 (LETFQAKELEATEKMLSLEQKMSMAQTAHSQFEQAYQ), and 509–603 (RHLA…RAPV). A flexible hinge region spans residues 666-783 (PGGSEDQRLN…EVPLFGRAAR (118 aa)). Coiled coils occupy residues 835-923 (EAEI…AKLE), 977-1115 (EMLS…TAKA), and 1209-1265 (VEAI…LQSV).

Belongs to the SMC family. MukB subfamily. As to quaternary structure, homodimerization via its hinge domain. Binds to DNA via its C-terminal region. Interacts, and probably forms a ternary complex, with MukE and MukF via its C-terminal region. The complex formation is stimulated by calcium or magnesium. Interacts with tubulin-related protein FtsZ.

The protein resides in the cytoplasm. It localises to the nucleoid. Functionally, plays a central role in chromosome condensation, segregation and cell cycle progression. Functions as a homodimer, which is essential for chromosome partition. Involved in negative DNA supercoiling in vivo, and by this means organize and compact chromosomes. May achieve or facilitate chromosome segregation by condensation DNA from both sides of a centrally located replisome during cell division. This is Chromosome partition protein MukB from Escherichia coli O7:K1 (strain IAI39 / ExPEC).